The following is a 534-amino-acid chain: CTP synthase (534 aa).

The interval 1-267 (MTKYIFVTGG…DQIVCDHLKL (267 aa)) is amidoligase domain. Residue Ser13 coordinates CTP. Residue Ser13 participates in UTP binding. 14–19 (SIGKGI) contributes to the ATP binding site. An L-glutamine-binding site is contributed by Tyr54. Asp71 contributes to the ATP binding site. 2 residues coordinate Mg(2+): Asp71 and Glu141. Residues 148–150 (DIE), 188–193 (KTKPTQ), and Lys224 contribute to the CTP site. Residues 188-193 (KTKPTQ) and Lys224 each bind UTP. One can recognise a Glutamine amidotransferase type-1 domain in the interval 292 to 534 (KIALVGKYVE…FVTAAVENMK (243 aa)). Residue Gly354 participates in L-glutamine binding. Cys381 serves as the catalytic Nucleophile; for glutamine hydrolysis. L-glutamine-binding positions include 382-385 (LGMQ), Glu405, and Arg463. Residues His508 and Glu510 contribute to the active site.

Belongs to the CTP synthase family. Homotetramer.

It carries out the reaction UTP + L-glutamine + ATP + H2O = CTP + L-glutamate + ADP + phosphate + 2 H(+). The catalysed reaction is L-glutamine + H2O = L-glutamate + NH4(+). It catalyses the reaction UTP + NH4(+) + ATP = CTP + ADP + phosphate + 2 H(+). Its pathway is pyrimidine metabolism; CTP biosynthesis via de novo pathway; CTP from UDP: step 2/2. With respect to regulation, allosterically activated by GTP, when glutamine is the substrate; GTP has no effect on the reaction when ammonia is the substrate. The allosteric effector GTP functions by stabilizing the protein conformation that binds the tetrahedral intermediate(s) formed during glutamine hydrolysis. Inhibited by the product CTP, via allosteric rather than competitive inhibition. In terms of biological role, catalyzes the ATP-dependent amination of UTP to CTP with either L-glutamine or ammonia as the source of nitrogen. Regulates intracellular CTP levels through interactions with the four ribonucleotide triphosphates. The polypeptide is CTP synthase (Streptococcus agalactiae serotype Ia (strain ATCC 27591 / A909 / CDC SS700)).